The primary structure comprises 215 residues: Large ribosomal subunit protein uL1 (215 aa).

The protein belongs to the universal ribosomal protein uL1 family. Part of the 50S ribosomal subunit.

Binds directly to 23S rRNA. Probably involved in E site tRNA release. Its function is as follows. Protein L1 is also a translational repressor protein, it controls the translation of its operon by binding to its mRNA. In Methanospirillum hungatei JF-1 (strain ATCC 27890 / DSM 864 / NBRC 100397 / JF-1), this protein is Large ribosomal subunit protein uL1.